A 363-amino-acid polypeptide reads, in one-letter code: ADP-ribosylhydrolase ARH3 (363 aa).

Position 41 (Glu-41) interacts with Mg(2+). Residue Thr-64 is modified to Phosphothreonine. 3 residues coordinate Mg(2+): Thr-76, Asp-77, and Asp-78. A substrate-binding site is contributed by Asp-77. Substrate is bound by residues 146-152, His-182, Leu-235, and Ile-271; that span reads KGSYGNG. Positions 314, 316, and 317 each coordinate Mg(2+).

The protein belongs to the ADP-ribosylglycohydrolase family. Monomer. Mg(2+) serves as cofactor. In terms of tissue distribution, ubiquitous. Expressed in skin fibroblasts.

The protein resides in the nucleus. It is found in the cytoplasm. Its subcellular location is the chromosome. It localises to the mitochondrion matrix. The catalysed reaction is [(1''-&gt;2')-ADP-alpha-D-ribose](n) + H2O = [(1''-&gt;2')-ADP-alpha-D-ribose](n-1) + ADP-D-ribose. The enzyme catalyses 1''-O-acetyl-ADP-alpha-D-ribose + H2O = ADP-D-ribose + acetate + H(+). It carries out the reaction O-(ADP-D-ribosyl)-L-seryl-[protein] + H2O = ADP-D-ribose + L-seryl-[protein]. It catalyses the reaction alpha-NAD(+) + H2O = ADP-D-ribose + nicotinamide + H(+). Its activity is regulated as follows. The protein undergoes a dramatic conformational switch from closed to open states upon substrate-binding, which enables specific substrate recognition for the 1''-O-linkage. The glutamate flap (Glu-41) blocks substrate entrance to Mg(2+) in the unliganded closed state. In presence of substrate, Glu-41 is ejected from the active site: this closed-to-open transition significantly widens the substrate-binding channel and precisely positions the scissile 1''-O-linkage for cleavage while securing tightly 2'- and 3'-hydroxyls of ADP-ribose. In terms of biological role, ADP-ribosylhydrolase that preferentially hydrolyzes the scissile alpha-O-linkage attached to the anomeric C1'' position of ADP-ribose and acts on different substrates, such as proteins ADP-ribosylated on serine and threonine, free poly(ADP-ribose) and O-acetyl-ADP-D-ribose. Specifically acts as a serine mono-ADP-ribosylhydrolase by mediating the removal of mono-ADP-ribose attached to serine residues on proteins, thereby playing a key role in DNA damage response. Serine ADP-ribosylation of proteins constitutes the primary form of ADP-ribosylation of proteins in response to DNA damage. Does not hydrolyze ADP-ribosyl-arginine, -cysteine, -diphthamide, or -asparagine bonds. Also able to degrade protein free poly(ADP-ribose), which is synthesized in response to DNA damage: free poly(ADP-ribose) acts as a potent cell death signal and its degradation by ADPRHL2 protects cells from poly(ADP-ribose)-dependent cell death, a process named parthanatos. Also hydrolyzes free poly(ADP-ribose) in mitochondria. Specifically digests O-acetyl-ADP-D-ribose, a product of deacetylation reactions catalyzed by sirtuins. Specifically degrades 1''-O-acetyl-ADP-D-ribose isomer, rather than 2''-O-acetyl-ADP-D-ribose or 3''-O-acetyl-ADP-D-ribose isomers. This Homo sapiens (Human) protein is ADP-ribosylhydrolase ARH3.